The primary structure comprises 76 residues: Sec-independent protein translocase protein TatA (76 aa).

A helical membrane pass occupies residues 1-21; sequence MGSFSIWHWLIVLVIVMLIFG. The tract at residues 47-76 is disordered; that stretch reads NADKPAEEAQPTQQVGGHTIDVEVKEKTKS. Residues 66–76 are compositionally biased toward basic and acidic residues; the sequence is IDVEVKEKTKS.

The protein belongs to the TatA/E family. The Tat system comprises two distinct complexes: a TatABC complex, containing multiple copies of TatA, TatB and TatC subunits, and a separate TatA complex, containing only TatA subunits. Substrates initially bind to the TatABC complex, which probably triggers association of the separate TatA complex to form the active translocon.

The protein localises to the cell inner membrane. Functionally, part of the twin-arginine translocation (Tat) system that transports large folded proteins containing a characteristic twin-arginine motif in their signal peptide across membranes. TatA could form the protein-conducting channel of the Tat system. This Dechloromonas aromatica (strain RCB) protein is Sec-independent protein translocase protein TatA.